A 1241-amino-acid chain; its full sequence is DNA-directed RNA polymerase subunit beta (1241 aa).

The segment at 1195-1219 (PQDVQENVSGENVDAGYENEDVDID) is disordered.

Belongs to the RNA polymerase beta chain family. In terms of assembly, the RNAP catalytic core consists of 2 alpha, 1 beta, 1 beta' and 1 omega subunit. When a sigma factor is associated with the core the holoenzyme is formed, which can initiate transcription.

The enzyme catalyses RNA(n) + a ribonucleoside 5'-triphosphate = RNA(n+1) + diphosphate. Its function is as follows. DNA-dependent RNA polymerase catalyzes the transcription of DNA into RNA using the four ribonucleoside triphosphates as substrates. The sequence is that of DNA-directed RNA polymerase subunit beta from Clostridium acetobutylicum (strain ATCC 824 / DSM 792 / JCM 1419 / IAM 19013 / LMG 5710 / NBRC 13948 / NRRL B-527 / VKM B-1787 / 2291 / W).